We begin with the raw amino-acid sequence, 143 residues long: Ribosome-binding factor A (143 aa).

The interval 119–143 is disordered; the sequence is KAKQQQFTPDTPDNSESVDGEKEQD. The span at 122-133 shows a compositional bias: polar residues; that stretch reads QQQFTPDTPDNS.

This sequence belongs to the RbfA family. As to quaternary structure, monomer. Binds 30S ribosomal subunits, but not 50S ribosomal subunits or 70S ribosomes.

The protein localises to the cytoplasm. One of several proteins that assist in the late maturation steps of the functional core of the 30S ribosomal subunit. Associates with free 30S ribosomal subunits (but not with 30S subunits that are part of 70S ribosomes or polysomes). Required for efficient processing of 16S rRNA. May interact with the 5'-terminal helix region of 16S rRNA. This chain is Ribosome-binding factor A, found in Shewanella frigidimarina (strain NCIMB 400).